We begin with the raw amino-acid sequence, 151 residues long: Small ribosomal subunit protein bS6 (151 aa).

Positions 96 to 151 are disordered; that stretch reads HEEGQSAMLTRRDDRRERDGDDRPRRREGGFDRGDRGDRGDRGPRRPRDNEAGEGA.

Belongs to the bacterial ribosomal protein bS6 family.

In terms of biological role, binds together with bS18 to 16S ribosomal RNA. This Brucella anthropi (strain ATCC 49188 / DSM 6882 / CCUG 24695 / JCM 21032 / LMG 3331 / NBRC 15819 / NCTC 12168 / Alc 37) (Ochrobactrum anthropi) protein is Small ribosomal subunit protein bS6.